The chain runs to 377 residues: Formate dehydrogenase, mitochondrial (377 aa).

The transit peptide at 1 to 29 (MAAMWRAAARQLVDRAVGSRAAHTSAGSK) directs the protein to the mitochondrion. The substrate site is built by Ile-121 and Asn-145. NAD(+) contacts are provided by residues Thr-146, Asp-220, 255–259 (PLTEK), Asn-281, Asp-307, and 331–334 (HISG).

It belongs to the D-isomer specific 2-hydroxyacid dehydrogenase family. FDH subfamily. In terms of assembly, homodimer.

It localises to the mitochondrion. The enzyme catalyses formate + NAD(+) = CO2 + NADH. Its function is as follows. Catalyzes the NAD(+)-dependent oxidation of formate to carbon dioxide. Involved in the cell stress response. This is Formate dehydrogenase, mitochondrial from Hordeum vulgare (Barley).